We begin with the raw amino-acid sequence, 180 residues long: uncharacterized protein (180 aa).

Residues 31-180 (LLVRTAEWLR…HLFEKEITAE (150 aa)) form the N-acetyltransferase domain.

Belongs to the acetyltransferase family.

This is an uncharacterized protein from Bacillus subtilis (strain 168).